Reading from the N-terminus, the 353-residue chain is MIKKYSFVNHRIVLYLILGCVVVCGVWYSFDVRQAIDVGAVDLSLPQMSNNLLKEVAVGEGKTTNRLSRLPVDSTVPTVLPQSLAGSIAPPLPLDAYGHLARVSAVRDFFDYFLTAQNDLTPAALDEIVTHEIVKQLHGKSAQAEAQDVWTRYCAYFSQLVKLPDMGMVLGDKLDFVAVQRALDQRASLAVRTLGDWSEPFFGAEQQRQRYDLERLKIADDQALTDEQKKKRLVALEQKLPSKVQEERIKIQQQQDAVVKIIQLQKDEVTPDGIRLQVVGLLGPEVAYRVAEIRRQDEIWQEKYKHYAAQRAQRAQIEAQQLEPKEHDVQVENLRQRIFTKPGEALRAASLDQ.

Residues 12 to 32 (IVLYLILGCVVVCGVWYSFDV) traverse the membrane as a helical segment.

This sequence belongs to the lipase chaperone family.

The protein localises to the cell inner membrane. In terms of biological role, may be involved in the folding of the extracellular lipase during its passage through the periplasm. The chain is Lipase chaperone from Xylella fastidiosa (strain M23).